A 79-amino-acid polypeptide reads, in one-letter code: Small ribosomal subunit protein bS16 (79 aa).

This sequence belongs to the bacterial ribosomal protein bS16 family.

The sequence is that of Small ribosomal subunit protein bS16 from Solidesulfovibrio magneticus (strain ATCC 700980 / DSM 13731 / RS-1) (Desulfovibrio magneticus).